A 205-amino-acid chain; its full sequence is ATP phosphoribosyltransferase (205 aa).

It belongs to the ATP phosphoribosyltransferase family. Short subfamily. As to quaternary structure, heteromultimer composed of HisG and HisZ subunits.

It localises to the cytoplasm. The enzyme catalyses 1-(5-phospho-beta-D-ribosyl)-ATP + diphosphate = 5-phospho-alpha-D-ribose 1-diphosphate + ATP. Its pathway is amino-acid biosynthesis; L-histidine biosynthesis; L-histidine from 5-phospho-alpha-D-ribose 1-diphosphate: step 1/9. Functionally, catalyzes the condensation of ATP and 5-phosphoribose 1-diphosphate to form N'-(5'-phosphoribosyl)-ATP (PR-ATP). Has a crucial role in the pathway because the rate of histidine biosynthesis seems to be controlled primarily by regulation of HisG enzymatic activity. This chain is ATP phosphoribosyltransferase, found in Helicobacter hepaticus (strain ATCC 51449 / 3B1).